We begin with the raw amino-acid sequence, 80 residues long: uncharacterized protein (80 aa).

Helical transmembrane passes span 2 to 22 (INLW…IGQV), 32 to 52 (FFGM…LTGG), and 55 to 75 (LVTG…RFMV).

The protein resides in the cell membrane. This is an uncharacterized protein from Escherichia coli (strain K12).